We begin with the raw amino-acid sequence, 473 residues long: Hyaluronidase-2 (473 aa).

The first 20 residues, Met1–Ala20, serve as a signal peptide directing secretion. Intrachain disulfides connect Cys47-Cys340 and Cys211-Cys227. Residues Asn74 and Asn103 are each glycosylated (N-linked (GlcNAc...) asparagine). The active-site Proton donor is the Glu135. Asn357 carries an N-linked (GlcNAc...) asparagine glycan. An EGF-like domain is found at Ala361–Gln439. 3 disulfide bridges follow: Cys365/Cys376, Cys370/Cys427, and Cys429/Cys438. A lipid anchor (GPI-anchor amidated glycine) is attached at Gly448. A propeptide spans Ala449–Leu473 (removed in mature form).

This sequence belongs to the glycosyl hydrolase 56 family. As to quaternary structure, interacts with MST1R. In terms of tissue distribution, widely expressed (at protein level).

Its subcellular location is the cell membrane. The enzyme catalyses Random hydrolysis of (1-&gt;4)-linkages between N-acetyl-beta-D-glucosamine and D-glucuronate residues in hyaluronate.. Its function is as follows. Catalyzes hyaluronan degradation into small fragments that are endocytosed and degraded in lysosomes by HYAL1 and exoglycosidases. Essential for the breakdown of extracellular matrix hyaluronan. This Homo sapiens (Human) protein is Hyaluronidase-2 (HYAL2).